The primary structure comprises 327 residues: Thiosulfate dehydrogenase (327 aa).

Residues 1 to 26 form the signal peptide; that stretch reads MKIIPYRKRSVLIATIFAISAVGITG. Residues 66–78 are compositionally biased toward low complexity; it reads NDMTATAGGTDTA. The interval 66–93 is disordered; it reads NDMTATAGGTDTASGKPTIKMPDESTIP. Cytochrome c domains are found at residues 99-196 and 219-305; these read AAVR…SWLS and PNTD…THLP. Heme c-binding residues include Cys125, Cys128, His129, Cys232, Cys235, and His236.

Monomer. Binds 2 heme c groups covalently per subunit.

Its subcellular location is the periplasm. The enzyme catalyses 2 thiosulfate + 2 Fe(III)-[cytochrome c] = tetrathionate + 2 Fe(II)-[cytochrome c] + 2 H(+). Functionally, catalyzes the oxidation of 2 molecules of thiosulfate to tetrathionate. This chain is Thiosulfate dehydrogenase (tsdA), found in Psychrobacter arcticus (strain DSM 17307 / VKM B-2377 / 273-4).